The primary structure comprises 324 residues: Beta-ketoacyl-[acyl-carrier-protein] synthase III (324 aa).

Active-site residues include cysteine 114 and histidine 251. The segment at 252–256 (QANLR) is ACP-binding. Residue asparagine 281 is part of the active site.

It belongs to the thiolase-like superfamily. FabH family. In terms of assembly, homodimer.

It is found in the cytoplasm. It catalyses the reaction malonyl-[ACP] + acetyl-CoA + H(+) = 3-oxobutanoyl-[ACP] + CO2 + CoA. It participates in lipid metabolism; fatty acid biosynthesis. In terms of biological role, catalyzes the condensation reaction of fatty acid synthesis by the addition to an acyl acceptor of two carbons from malonyl-ACP. Catalyzes the first condensation reaction which initiates fatty acid synthesis and may therefore play a role in governing the total rate of fatty acid production. Possesses both acetoacetyl-ACP synthase and acetyl transacylase activities. Its substrate specificity determines the biosynthesis of branched-chain and/or straight-chain of fatty acids. This Dinoroseobacter shibae (strain DSM 16493 / NCIMB 14021 / DFL 12) protein is Beta-ketoacyl-[acyl-carrier-protein] synthase III.